A 504-amino-acid polypeptide reads, in one-letter code: Melianol synthase CYP71BQ5 (504 aa).

A helical transmembrane segment spans residues Glu2–Val22. Cys442 is a heme binding site.

Belongs to the cytochrome P450 family. It depends on heme as a cofactor. Mainly expressed in fruits and leaves.

It localises to the membrane. It catalyses the reaction dihydroniloticin + 2 reduced [NADPH--hemoprotein reductase] + 2 O2 = melianol + 2 oxidized [NADPH--hemoprotein reductase] + 3 H2O + 2 H(+). The protein operates within secondary metabolite biosynthesis; terpenoid biosynthesis. Monooxygenase involved in the biosynthesis of limonoids triterpene natural products such as azadirachtin, an antifeedant widely used as bioinsecticide, and possessing many medicinal applications including anti-tumoral, anti-malarial, anti-rheumatic, antibacterial, anti-inflammatory, anti-pyretic and diuretic effects. Catalyzes the conversion of dihydroniloticin to the protolimonoid melianol. The sequence is that of Melianol synthase CYP71BQ5 from Azadirachta indica (Neem tree).